We begin with the raw amino-acid sequence, 295 residues long: Probable dTDP-4,6-dihydroxy-2-methyloxan-3-one 4-ketoreductase (295 aa).

Residues 10 to 12, 36 to 37, 60 to 62, Tyr-126, and Lys-130 each bind NADH; these read GML, DV, and AYT. NADPH contacts are provided by residues 11 to 12, 36 to 37, 60 to 62, Tyr-126, and Lys-130; these read ML, DV, and AYT. Catalysis depends on Tyr-126, which acts as the Proton donor/acceptor.

The protein belongs to the dTDP-4-dehydrorhamnose reductase family. It depends on Mg(2+) as a cofactor.

The protein operates within antibiotic biosynthesis. In terms of biological role, involved in the biosynthesis of one of the two 2,6-deoxysugars, dTDP-L-oleandrose, attached to the macrolactone ring oleandolide to produce the aglycone antibiotic oleandomycin. Probably catalyzes the reduction of dTDP-4-keto-2,6-dideoxy-beta-L-galactose to yield dTDP-L-olivose. The polypeptide is Probable dTDP-4,6-dihydroxy-2-methyloxan-3-one 4-ketoreductase (Streptomyces antibioticus).